Here is a 442-residue protein sequence, read N- to C-terminus: Adenylosuccinate synthetase (442 aa).

GTP contacts are provided by residues 25–31, 53–55, and K62; these read GDEGKGK and GHT. The Proton acceptor role is filled by D26. D26 and G53 together coordinate Mg(2+). IMP contacts are provided by residues 26–29 and 51–54; these read DEGK and NAGH. H54 serves as the catalytic Proton donor. Positions 141, 155, 232, and 247 each coordinate IMP. Position 307 (T307) interacts with GTP. Residue 307-313 participates in substrate binding; it reads TTTKRPR. R311 contributes to the IMP binding site. GTP-binding positions include R313, 339–341, and 425–427; these read KLD and GVG.

Belongs to the adenylosuccinate synthetase family. In terms of assembly, homodimer. The cofactor is Mg(2+).

The protein resides in the cytoplasm. The enzyme catalyses IMP + L-aspartate + GTP = N(6)-(1,2-dicarboxyethyl)-AMP + GDP + phosphate + 2 H(+). Its pathway is purine metabolism; AMP biosynthesis via de novo pathway; AMP from IMP: step 1/2. With respect to regulation, inhibited by hadacidin. Activated by fructose 1,6-bisphosphate. Plays an important role in the salvage pathway for purine nucleotide biosynthesis. Catalyzes the first committed step in the biosynthesis of AMP from IMP. This Plasmodium falciparum protein is Adenylosuccinate synthetase (Adss).